Here is an 859-residue protein sequence, read N- to C-terminus: Leucine--tRNA ligase (859 aa).

Residues 42-52 (PYPSGRLHMGH) carry the 'HIGH' region motif. The short motif at 618 to 622 (KMSKS) is the 'KMSKS' region element. Lysine 621 contributes to the ATP binding site.

The protein belongs to the class-I aminoacyl-tRNA synthetase family.

It is found in the cytoplasm. It catalyses the reaction tRNA(Leu) + L-leucine + ATP = L-leucyl-tRNA(Leu) + AMP + diphosphate. The chain is Leucine--tRNA ligase from Shewanella sp. (strain ANA-3).